The following is a 459-amino-acid chain: Serine carboxypeptidase-like 27 (459 aa).

Residues 1–20 (MDYSFLLIILLLTISTSCCA) form the signal peptide. Disulfide bonds link Cys-91-Cys-344, Cys-252-Cys-264, and Cys-288-Cys-312. An N-linked (GlcNAc...) asparagine glycan is attached at Asn-142. Ser-184 is an active-site residue. N-linked (GlcNAc...) asparagine glycosylation is found at Asn-289 and Asn-333. Residues Asp-381 and His-433 contribute to the active site.

Belongs to the peptidase S10 family. As to expression, ubiquitous.

The protein localises to the secreted. Functionally, probable carboxypeptidase. This is Serine carboxypeptidase-like 27 (SCPL27) from Arabidopsis thaliana (Mouse-ear cress).